The sequence spans 517 residues: Maturase K (517 aa).

It belongs to the intron maturase 2 family. MatK subfamily.

The protein resides in the plastid. It is found in the chloroplast. In terms of biological role, usually encoded in the trnK tRNA gene intron. Probably assists in splicing its own and other chloroplast group II introns. This Juncus effusus (Soft rush) protein is Maturase K.